The sequence spans 2300 residues: Protein Ycf2 (2300 aa).

Residue 1642-1649 (GSIGTGRS) coordinates ATP.

It belongs to the Ycf2 family.

It is found in the plastid. The protein localises to the chloroplast stroma. Functionally, probable ATPase of unknown function. Its presence in a non-photosynthetic plant (Epifagus virginiana) and experiments in tobacco indicate that it has an essential function which is probably not related to photosynthesis. The sequence is that of Protein Ycf2 from Vitis vinifera (Grape).